Here is a 1135-residue protein sequence, read N- to C-terminus: WASH complex subunit 4 (1135 aa).

Ala2 is modified (N-acetylalanine).

This sequence belongs to the SWIP family. Probable component of the WASH complex.

This is WASH complex subunit 4 from Dictyostelium discoideum (Social amoeba).